The following is a 122-amino-acid chain: UPF0102 protein CPR_1677 (122 aa).

The protein belongs to the UPF0102 family.

In Clostridium perfringens (strain SM101 / Type A), this protein is UPF0102 protein CPR_1677.